The sequence spans 582 residues: DNA polymerase IV (582 aa).

The segment at 127 to 161 is disordered; the sequence is NADDGQSSTDKESEISTDVESERNDDSNNKDMIQA. Residues 135-155 are compositionally biased toward basic and acidic residues; it reads TDKESEISTDVESERNDDSNN. Residues 360-369 form an involved in ssDNA binding region; the sequence is RGYSKCGDID. Mg(2+) contacts are provided by Asp-367, Asp-369, and Asp-502.

Belongs to the DNA polymerase type-X family. Interacts with DNL4 subunit of the DNL4-LIF1 complex. It depends on Mg(2+) as a cofactor.

It is found in the nucleus. It catalyses the reaction DNA(n) + a 2'-deoxyribonucleoside 5'-triphosphate = DNA(n+1) + diphosphate. Its activity is regulated as follows. Stimulated by the interaction with the DNL4-LIF1 complex. In terms of biological role, repair polymerase. Involved in gap-filling in DNA nonhomologous end joining (NHEJ) required for double-strand break repair. Seems to conduct DNA synthesis in a stepwise distributive fashion rather than in a processive fashion as for other DNA polymerases. Preferentially acts upon short gaps formed by the alignment of linear duplexes with complementary single-strand ends. Required for filling gaps that need removal of a 5'- or 3'-terminal mismatch, however lacks nuclease activities. The protein is DNA polymerase IV (POL4) of Saccharomyces cerevisiae (strain ATCC 204508 / S288c) (Baker's yeast).